The primary structure comprises 151 residues: Deoxyuridine 5'-triphosphate nucleotidohydrolase (151 aa).

Residues 70–72 (RSG), N83, 87–89 (LID), and M97 each bind substrate.

It belongs to the dUTPase family. Mg(2+) serves as cofactor.

It carries out the reaction dUTP + H2O = dUMP + diphosphate + H(+). Its pathway is pyrimidine metabolism; dUMP biosynthesis; dUMP from dCTP (dUTP route): step 2/2. In terms of biological role, this enzyme is involved in nucleotide metabolism: it produces dUMP, the immediate precursor of thymidine nucleotides and it decreases the intracellular concentration of dUTP so that uracil cannot be incorporated into DNA. This is Deoxyuridine 5'-triphosphate nucleotidohydrolase from Histophilus somni (strain 129Pt) (Haemophilus somnus).